The sequence spans 425 residues: Riboflavin biosynthesis protein RibBA (425 aa).

Residues 1 to 204 (MTRLDSVERA…IADLIEWRRK (204 aa)) form a DHBP synthase region. Residues 28-29 (RE), D33, 141-145 (RPGHT), and E165 contribute to the D-ribulose 5-phosphate site. E29 is a Mg(2+) binding site. H144 contacts Mg(2+). Positions 205 to 425 (HEKHIERIAE…HLPGEFGGAL (221 aa)) are GTP cyclohydrolase II. 259 to 263 (RVHSE) contributes to the GTP binding site. The Zn(2+) site is built by C264, C275, and C277. GTP-binding positions include Q280, 303 to 305 (EGR), and T325. D337 serves as the catalytic Proton acceptor; for GTP cyclohydrolase activity. R339 serves as the catalytic Nucleophile; for GTP cyclohydrolase activity. Positions 360 and 365 each coordinate GTP.

In the N-terminal section; belongs to the DHBP synthase family. This sequence in the C-terminal section; belongs to the GTP cyclohydrolase II family. It depends on Mg(2+) as a cofactor. Mn(2+) serves as cofactor. Zn(2+) is required as a cofactor.

The enzyme catalyses D-ribulose 5-phosphate = (2S)-2-hydroxy-3-oxobutyl phosphate + formate + H(+). The catalysed reaction is GTP + 4 H2O = 2,5-diamino-6-hydroxy-4-(5-phosphoribosylamino)-pyrimidine + formate + 2 phosphate + 3 H(+). The protein operates within cofactor biosynthesis; riboflavin biosynthesis; 2-hydroxy-3-oxobutyl phosphate from D-ribulose 5-phosphate: step 1/1. It functions in the pathway cofactor biosynthesis; riboflavin biosynthesis; 5-amino-6-(D-ribitylamino)uracil from GTP: step 1/4. Functionally, catalyzes the conversion of D-ribulose 5-phosphate to formate and 3,4-dihydroxy-2-butanone 4-phosphate. Catalyzes the conversion of GTP to 2,5-diamino-6-ribosylamino-4(3H)-pyrimidinone 5'-phosphate (DARP), formate and pyrophosphate. The sequence is that of Riboflavin biosynthesis protein RibBA from Mycobacterium avium (strain 104).